A 126-amino-acid polypeptide reads, in one-letter code: Large ribosomal subunit protein bL12 (126 aa).

Belongs to the bacterial ribosomal protein bL12 family. In terms of assembly, homodimer. Part of the ribosomal stalk of the 50S ribosomal subunit. Forms a multimeric L10(L12)X complex, where L10 forms an elongated spine to which 2 to 4 L12 dimers bind in a sequential fashion. Binds GTP-bound translation factors.

Functionally, forms part of the ribosomal stalk which helps the ribosome interact with GTP-bound translation factors. Is thus essential for accurate translation. This is Large ribosomal subunit protein bL12 from Teredinibacter turnerae (strain ATCC 39867 / T7901).